A 199-amino-acid polypeptide reads, in one-letter code: Small ribosomal subunit protein uS14m (199 aa).

The segment at 28-67 (LSTPAPEPAKPSSEETTESTEPATSVEDAGEPMKEKRITQ) is disordered.

The protein belongs to the universal ribosomal protein uS14 family. Component of the mitochondrial ribosome small subunit (28S) which comprises a 12S rRNA and about 30 distinct proteins. Interacts with LIAT1.

The protein resides in the mitochondrion. This Caenorhabditis elegans protein is Small ribosomal subunit protein uS14m (mrps-14).